Reading from the N-terminus, the 456-residue chain is Probable glycine dehydrogenase (decarboxylating) subunit 1 (456 aa).

The protein belongs to the GcvP family. N-terminal subunit subfamily. As to quaternary structure, the glycine cleavage system is composed of four proteins: P, T, L and H. In this organism, the P 'protein' is a heterodimer of two subunits.

It carries out the reaction N(6)-[(R)-lipoyl]-L-lysyl-[glycine-cleavage complex H protein] + glycine + H(+) = N(6)-[(R)-S(8)-aminomethyldihydrolipoyl]-L-lysyl-[glycine-cleavage complex H protein] + CO2. The glycine cleavage system catalyzes the degradation of glycine. The P protein binds the alpha-amino group of glycine through its pyridoxal phosphate cofactor; CO(2) is released and the remaining methylamine moiety is then transferred to the lipoamide cofactor of the H protein. In Legionella pneumophila subsp. pneumophila (strain Philadelphia 1 / ATCC 33152 / DSM 7513), this protein is Probable glycine dehydrogenase (decarboxylating) subunit 1.